The following is a 101-amino-acid chain: Urease subunit beta (101 aa).

Belongs to the urease beta subunit family. In terms of assembly, heterotrimer of UreA (gamma), UreB (beta) and UreC (alpha) subunits. Three heterotrimers associate to form the active enzyme.

The protein resides in the cytoplasm. It carries out the reaction urea + 2 H2O + H(+) = hydrogencarbonate + 2 NH4(+). The protein operates within nitrogen metabolism; urea degradation; CO(2) and NH(3) from urea (urease route): step 1/1. This Dechloromonas aromatica (strain RCB) protein is Urease subunit beta.